A 612-amino-acid chain; its full sequence is Chaperone protein DnaK (612 aa).

Position 173 is a phosphothreonine; by autocatalysis (Thr-173). Residues 576–612 (AAKQAQAQQDGGAGAKKADDNVVDAEYEEVNDDKDQK) form a disordered region. The span at 596–612 (NVVDAEYEEVNDDKDQK) shows a compositional bias: acidic residues.

It belongs to the heat shock protein 70 family.

In terms of biological role, acts as a chaperone. This is Chaperone protein DnaK from Bacillus licheniformis (strain ATCC 14580 / DSM 13 / JCM 2505 / CCUG 7422 / NBRC 12200 / NCIMB 9375 / NCTC 10341 / NRRL NRS-1264 / Gibson 46).